A 352-amino-acid chain; its full sequence is Biotin synthase (352 aa).

Residues 44 to 262 (NRVQVSTLLS…LAVARILMPK (219 aa)) form the Radical SAM core domain. Cysteine 59, cysteine 63, and cysteine 66 together coordinate [4Fe-4S] cluster. [2Fe-2S] cluster-binding residues include cysteine 103, cysteine 134, cysteine 194, and arginine 266.

It belongs to the radical SAM superfamily. Biotin synthase family. In terms of assembly, homodimer. [4Fe-4S] cluster is required as a cofactor. It depends on [2Fe-2S] cluster as a cofactor.

It carries out the reaction (4R,5S)-dethiobiotin + (sulfur carrier)-SH + 2 reduced [2Fe-2S]-[ferredoxin] + 2 S-adenosyl-L-methionine = (sulfur carrier)-H + biotin + 2 5'-deoxyadenosine + 2 L-methionine + 2 oxidized [2Fe-2S]-[ferredoxin]. It participates in cofactor biosynthesis; biotin biosynthesis; biotin from 7,8-diaminononanoate: step 2/2. In terms of biological role, catalyzes the conversion of dethiobiotin (DTB) to biotin by the insertion of a sulfur atom into dethiobiotin via a radical-based mechanism. The chain is Biotin synthase from Pseudomonas putida (strain ATCC 47054 / DSM 6125 / CFBP 8728 / NCIMB 11950 / KT2440).